A 428-amino-acid polypeptide reads, in one-letter code: ORC1-type DNA replication protein 5 (428 aa).

ATP contacts are provided by residues 62 to 66 (TGKSL), Y219, and R231.

The protein belongs to the CDC6/cdc18 family.

In terms of biological role, involved in regulation of DNA replication. The polypeptide is ORC1-type DNA replication protein 5 (orc5) (Halobacterium salinarum (strain ATCC 700922 / JCM 11081 / NRC-1) (Halobacterium halobium)).